The primary structure comprises 179 residues: Bifunctional protein PyrR (179 aa).

Positions 97 to 109 (IILTDDVLYTGRT) match the PRPP-binding motif.

It belongs to the purine/pyrimidine phosphoribosyltransferase family. PyrR subfamily.

It catalyses the reaction UMP + diphosphate = 5-phospho-alpha-D-ribose 1-diphosphate + uracil. Regulates the transcription of the pyrimidine nucleotide (pyr) operon in response to exogenous pyrimidines. In terms of biological role, also displays a weak uracil phosphoribosyltransferase activity which is not physiologically significant. The sequence is that of Bifunctional protein PyrR from Elusimicrobium minutum (strain Pei191).